Consider the following 181-residue polypeptide: Large ribosomal subunit protein uL10 (181 aa).

It belongs to the universal ribosomal protein uL10 family. Part of the ribosomal stalk of the 50S ribosomal subunit. The N-terminus interacts with L11 and the large rRNA to form the base of the stalk. The C-terminus forms an elongated spine to which L12 dimers bind in a sequential fashion forming a multimeric L10(L12)X complex.

In terms of biological role, forms part of the ribosomal stalk, playing a central role in the interaction of the ribosome with GTP-bound translation factors. The polypeptide is Large ribosomal subunit protein uL10 (Protochlamydia amoebophila (strain UWE25)).